The following is a 355-amino-acid chain: Isopentenyl-diphosphate delta-isomerase (355 aa).

12–13 (RK) is a binding site for substrate. Residues S70, 71 to 73 (SMT), S101, and N130 each bind FMN. A substrate-binding site is contributed by 101–103 (SMR). Q165 contributes to the substrate binding site. E166 is a Mg(2+) binding site. FMN is bound by residues K197 and 308 to 309 (AG).

It belongs to the IPP isomerase type 2 family. Homooctamer. Dimer of tetramers. It depends on FMN as a cofactor. Requires NADPH as cofactor. Mg(2+) is required as a cofactor.

The protein localises to the cytoplasm. The catalysed reaction is isopentenyl diphosphate = dimethylallyl diphosphate. Functionally, involved in the biosynthesis of isoprenoids. Catalyzes the 1,3-allylic rearrangement of the homoallylic substrate isopentenyl (IPP) to its allylic isomer, dimethylallyl diphosphate (DMAPP). The chain is Isopentenyl-diphosphate delta-isomerase from Chlorobium phaeovibrioides (strain DSM 265 / 1930) (Prosthecochloris vibrioformis (strain DSM 265)).